The sequence spans 70 residues: uncharacterized protein (70 aa).

The C2H2-type zinc finger occupies 21-43 (YECPICGEIYIKRKSMITHLRKH).

This is an uncharacterized protein from Saccharolobus islandicus (Sulfolobus islandicus).